Reading from the N-terminus, the 367-residue chain is MPPRKKEYGIKRASGSLVHFRAPVSATTIRRHSAVVPSVLTFAVIVASGGLLLMIEKGMLNSVQTPPPRANGRKVEYRLRSSSDTAADVESQIVQEIRNRTIRSVCGQRNMPHSVWSLSPLQRKTLLQHILVNDEHRFLYCYVPKVACSNWKRVLKVLSGALANVDIKVKMDHRADLVFLSDLPPEEIRHRLRHYFKFMFVREPMARLLSAYRNKFGEIEAYQRKYGAEIIRRYRKGYAKDKKISGNDVTFTEFTRYLVDEDPERMNEHWMPIYNLCQPCAIEYDFIGSYERLESDASYILERVGAPQHVRFPERQTWYKPVTKETLHYYLCTVPQKFLKELLPKYILDFSLFGYPLPNTTTEYCRH.

Over 1–34 (MPPRKKEYGIKRASGSLVHFRAPVSATTIRRHSA) the chain is Cytoplasmic. A helical; Signal-anchor for type II membrane protein membrane pass occupies residues 35 to 55 (VVPSVLTFAVIVASGGLLLMI). The Lumenal segment spans residues 56 to 367 (EKGMLNSVQT…PNTTTEYCRH (312 aa)). Residue N99 is glycosylated (N-linked (GlcNAc...) asparagine). Residues 144–150 (PKVACSN) and 202–210 (REPMARLLS) contribute to the 3'-phosphoadenylyl sulfate site. N359 is a glycosylation site (N-linked (GlcNAc...) asparagine).

This sequence belongs to the sulfotransferase 2 family.

It is found in the golgi apparatus membrane. In terms of biological role, catalyzes the transfer of sulfate to position 4 of the N-acetylgalactosamine (GalNAc) residue of dermatan sulfate. In Danio rerio (Zebrafish), this protein is Carbohydrate sulfotransferase 14 (chst14).